The primary structure comprises 190 residues: Vacuolar protein sorting-associated protein 29 (190 aa).

The protein belongs to the VPS29 family. Component of the retromer complex which consists of VPS29 (MAG1), VPS26 (VPS26A or VPS26B), VPS35 (VPS35A or VPS35B or VPS35C), VPS5/17 (SNX1 or SNX2A or SNX2B). Component of a retromer subcomplex consisting of VPS29 (MAG1), VPS26 (VPS26A or VPS26B), VPS35 (VPS35A or VPS35B or VPS35C).

The protein resides in the cytoplasm. It is found in the endosome membrane. The protein localises to the prevacuolar compartment membrane. It localises to the golgi apparatus. Its subcellular location is the trans-Golgi network membrane. The protein resides in the late endosome membrane. Functionally, plays a role in vesicular protein sorting. Component of the membrane-associated retromer complex which is essential in endosome-to-Golgi retrograde transport. Required for the auxin-carrier protein PIN2 sorting to the lytic vacuolar pathway and the PIN1 recycling to the plasma membrane, thus influencing auxin transport orientation. Also involved in the efficient sorting of seed storage proteins globulin 12S and albumin 2S. The VPS29-VPS26-VPS35 subcomplex may be involved in recycling of specific cargos from endosome to the plasma membrane. The polypeptide is Vacuolar protein sorting-associated protein 29 (Arabidopsis thaliana (Mouse-ear cress)).